The primary structure comprises 2027 residues: Citron Rho-interacting kinase (2027 aa).

Met1 bears the N-acetylmethionine mark. Positions 97 to 360 constitute a Protein kinase domain; it reads FEVRSLVGCG…FEGLCCHPFF (264 aa). ATP contacts are provided by residues 103–111 and Lys126; that span reads VGCGHFAEV. The Proton acceptor role is filled by Asp221. An AGC-kinase C-terminal domain is found at 361–431; sequence SKIDWNNIRN…SKALGILGRS (71 aa). Phosphoserine occurs at positions 433, 440, 480, and 582. A coiled-coil region spans residues 453 to 1297; the sequence is IKSKELQDSQ…SAREEAAHRK (845 aa). The interval 1091–1302 is interaction with Rho/Rac; sequence LAVKEHKAEI…AAHRKATDHP (212 aa). Residue Tyr1196 is modified to Phosphotyrosine. Residues 1290 to 1303 show a composition bias toward basic and acidic residues; that stretch reads REEAAHRKATDHPH. Disordered stretches follow at residues 1290–1310 and 1322–1351; these read REEAAHRKATDHPHPSTPATA and SPEHQPSAMSLLAPPSSRRKESSTPEEFSR. A compositionally biased stretch (low complexity) spans 1327 to 1337; the sequence is PSAMSLLAPPS. The span at 1339–1351 shows a compositional bias: basic and acidic residues; that stretch reads RRKESSTPEEFSR. The Phorbol-ester/DAG-type zinc finger occupies 1362 to 1411; sequence PHRFNVGLNMRATKCAVCLDTVHFGRQASKCLECQVMCHPKCSTCLPATC. The region spanning 1443-1563 is the PH domain; the sequence is SLHLEGWMKV…WVTALESVVA (121 aa). The 291-residue stretch at 1591 to 1881 folds into the CNH domain; it reads RLDMNCTLPF…RYLGPAISSG (291 aa). Lys1721 bears the N6-acetyllysine mark. The segment at 1905-2012 is disordered; that stretch reads ESGTEHHRGP…RGRLPAGAVR (108 aa). Ser1940 is modified (phosphoserine). The span at 1948 to 2003 shows a compositional bias: basic and acidic residues; the sequence is SHPREPSTPHRYREGRTELRRDKSPGRPLEREKSPGRMLSTRRERSPGRLFEDSSR. Positions 1953–1958 match the SH3-binding motif; it reads PSTPHR. At Ser1993 the chain carries Phosphoserine. Thr2013 is subject to Phosphothreonine.

The protein belongs to the protein kinase superfamily. AGC Ser/Thr protein kinase family. In terms of assembly, directly interacts with KIF14 depending on the activation state (stronger interaction with the kinase-dead form). Homodimer. Interacts with TTC3.

It localises to the cytoplasm. It catalyses the reaction L-seryl-[protein] + ATP = O-phospho-L-seryl-[protein] + ADP + H(+). The enzyme catalyses L-threonyl-[protein] + ATP = O-phospho-L-threonyl-[protein] + ADP + H(+). Plays a role in cytokinesis. Required for KIF14 localization to the central spindle and midbody. Putative RHO/RAC effector that binds to the GTP-bound forms of RHO and RAC1. It probably binds p21 with a tighter specificity in vivo. Displays serine/threonine protein kinase activity. Plays an important role in the regulation of cytokinesis and the development of the central nervous system. Phosphorylates MYL9/MLC2. The protein is Citron Rho-interacting kinase (CIT) of Homo sapiens (Human).